We begin with the raw amino-acid sequence, 282 residues long: Pantothenate synthetase (282 aa).

Residue 30-37 participates in ATP binding; it reads MGYLHEGH. The Proton donor role is filled by H37. Q61 contacts (R)-pantoate. Beta-alanine is bound at residue Q61. ATP is bound at residue 147–150; it reads GMKD. Q153 lines the (R)-pantoate pocket. ATP contacts are provided by residues V176 and 184–187; that span reads KSSR.

The protein belongs to the pantothenate synthetase family. As to quaternary structure, homodimer.

It localises to the cytoplasm. It carries out the reaction (R)-pantoate + beta-alanine + ATP = (R)-pantothenate + AMP + diphosphate + H(+). It functions in the pathway cofactor biosynthesis; (R)-pantothenate biosynthesis; (R)-pantothenate from (R)-pantoate and beta-alanine: step 1/1. Its function is as follows. Catalyzes the condensation of pantoate with beta-alanine in an ATP-dependent reaction via a pantoyl-adenylate intermediate. The chain is Pantothenate synthetase from Bacillus thuringiensis (strain Al Hakam).